The primary structure comprises 545 residues: Chromosomal replication initiator protein DnaA (545 aa).

A domain I, interacts with DnaA modulators region spans residues 1-72 (MNDFWQHCSA…DMARDFWQAP (72 aa)). The domain II stretch occupies residues 72-208 (PVDVQFVLDP…GETDSMYERS (137 aa)). The segment covering 90-105 (AAAPAPASARPASAPG) has biased composition (low complexity). Disordered regions lie at residues 90-112 (AAAP…GSAG) and 181-204 (AAAR…TDSM). Over residues 189–201 (PGQSASSNGNGET) the composition is skewed to polar residues. Residues 209 to 425 (KLNPVLTFDN…GALRKILAYS (217 aa)) are domain III, AAA+ region. ATP-binding residues include glycine 253, glycine 255, lysine 256, and threonine 257. Positions 426–545 (KFHGREITIE…LHVLEQTLKG (120 aa)) are domain IV, binds dsDNA.

It belongs to the DnaA family. Oligomerizes as a right-handed, spiral filament on DNA at oriC.

It is found in the cytoplasm. Plays an essential role in the initiation and regulation of chromosomal replication. ATP-DnaA binds to the origin of replication (oriC) to initiate formation of the DNA replication initiation complex once per cell cycle. Binds the DnaA box (a 9 base pair repeat at the origin) and separates the double-stranded (ds)DNA. Forms a right-handed helical filament on oriC DNA; dsDNA binds to the exterior of the filament while single-stranded (ss)DNA is stabiized in the filament's interior. The ATP-DnaA-oriC complex binds and stabilizes one strand of the AT-rich DNA unwinding element (DUE), permitting loading of DNA polymerase. After initiation quickly degrades to an ADP-DnaA complex that is not apt for DNA replication. Binds acidic phospholipids. The protein is Chromosomal replication initiator protein DnaA of Paraburkholderia phytofirmans (strain DSM 17436 / LMG 22146 / PsJN) (Burkholderia phytofirmans).